Reading from the N-terminus, the 464-residue chain is MGSPGLRPTLLLPQVLLLLLALLHVPPSQGFPGSGDSPLEDDGVWSSHSLYKDTPWCSPIKVKYGDVYCRAPPGGYYKTALGTRCDIRCRKGYELHGSSQLVCQSNRRWSDKVICKQKRCPTLTMPANGGFKCVDGAYFNSRCEYYCSPGYTLKGERTVTCMDNKAWSGRPASCVDMEPPRIKCPSVKERIAEPNKLTVRVSWETPEGRDTADGILTDVILRGLPPGSNFPEGDHKIEYTVYDRAENKGTCKFRVKVRVRRCGKLNAPENGYMKCSSDGDNYGATCEFSCIGGYELQGSPARVCQSNLAWSGTEPSCAAMNVNVGVRTAAALLDQFYEKRRLLIVSTPTARNLLYRLQLGMLQQAQCGLDLRHITVVELVGVFPTLIGRIRAKIMPPALALQLRLLLRIPLYSFSMVLVDKHGMDKERYVSLVTPMALFNLIDTFPLRKEEMILQAEMGQSCNT.

Positions 1-28 (MGSPGLRPTLLLPQVLLLLLALLHVPPS) are cleaved as a signal peptide. The O-linked (Xyl...) (chondroitin sulfate) serine glycan is linked to serine 34. 5 cysteine pairs are disulfide-bonded: cysteine 57–cysteine 85, cysteine 69–cysteine 103, cysteine 89–cysteine 115, cysteine 120–cysteine 161, and cysteine 147–cysteine 174. 2 consecutive Sushi domains span residues 57-117 (CSPI…ICKQ) and 118-176 (KRCP…SCVD). An HYR domain is found at 177–259 (MEPPRIKCPS…TCKFRVKVRV (83 aa)). The region spanning 260–319 (RRCGKLNAPENGYMKCSSDGDNYGATCEFSCIGGYELQGSPARVCQSNLAWSGTEPSCAA) is the Sushi 3 domain. Disulfide bonds link cysteine 262-cysteine 304 and cysteine 290-cysteine 317.

Normal cells and cells transformed by human papillomavirus type 16 E6E7 and polyomavirus large T. Suppressed in cells transformed by oncogenes such as V-SRC, V-ABL, V-FPS, V-MOS, V-SIS, V-K-RAS, and polyomavirus middle T.

The polypeptide is Sushi repeat-containing protein SRPX (Srpx) (Rattus norvegicus (Rat)).